A 336-amino-acid chain; its full sequence is Probable deoxyhypusine synthase (336 aa).

The Nucleophile role is filled by lysine 308.

It belongs to the deoxyhypusine synthase family. Requires NAD(+) as cofactor.

The enzyme catalyses [eIF5A protein]-L-lysine + spermidine = [eIF5A protein]-deoxyhypusine + propane-1,3-diamine. The protein operates within protein modification; eIF5A hypusination. Functionally, catalyzes the NAD-dependent oxidative cleavage of spermidine and the subsequent transfer of the butylamine moiety of spermidine to the epsilon-amino group of a specific lysine residue of the eIF-5A precursor protein to form the intermediate deoxyhypusine residue. This is Probable deoxyhypusine synthase from Thermococcus gammatolerans (strain DSM 15229 / JCM 11827 / EJ3).